Consider the following 159-residue polypeptide: 6,7-dimethyl-8-ribityllumazine synthase (159 aa).

Residues W30, 64–66, and 88–90 contribute to the 5-amino-6-(D-ribitylamino)uracil site; these read TFE and CVI. 93–94 provides a ligand contact to (2S)-2-hydroxy-3-oxobutyl phosphate; that stretch reads ET. H96 serves as the catalytic Proton donor. Residue F121 participates in 5-amino-6-(D-ribitylamino)uracil binding. R135 is a (2S)-2-hydroxy-3-oxobutyl phosphate binding site.

This sequence belongs to the DMRL synthase family.

The catalysed reaction is (2S)-2-hydroxy-3-oxobutyl phosphate + 5-amino-6-(D-ribitylamino)uracil = 6,7-dimethyl-8-(1-D-ribityl)lumazine + phosphate + 2 H2O + H(+). It functions in the pathway cofactor biosynthesis; riboflavin biosynthesis; riboflavin from 2-hydroxy-3-oxobutyl phosphate and 5-amino-6-(D-ribitylamino)uracil: step 1/2. In terms of biological role, catalyzes the formation of 6,7-dimethyl-8-ribityllumazine by condensation of 5-amino-6-(D-ribitylamino)uracil with 3,4-dihydroxy-2-butanone 4-phosphate. This is the penultimate step in the biosynthesis of riboflavin. In Cytophaga hutchinsonii (strain ATCC 33406 / DSM 1761 / CIP 103989 / NBRC 15051 / NCIMB 9469 / D465), this protein is 6,7-dimethyl-8-ribityllumazine synthase.